The primary structure comprises 212 residues: Thymidylate kinase (212 aa).

ATP is bound at residue 10–17 (GPDGAGKS).

It belongs to the thymidylate kinase family.

It carries out the reaction dTMP + ATP = dTDP + ADP. Phosphorylation of dTMP to form dTDP in both de novo and salvage pathways of dTTP synthesis. The chain is Thymidylate kinase from Lactobacillus helveticus (strain DPC 4571).